The primary structure comprises 748 residues: Structure-specific endonuclease subunit SLX4 (748 aa).

Over residues 62–75 (KSVTAQKSPMTQET) the composition is skewed to polar residues. The disordered stretch occupies residues 62–104 (KSVTAQKSPMTQETTKNDTERNKDVDKSCNPVSTSHPDLGGSN). T72 is subject to Phosphothreonine; by ATR and ATM. Residues 76–88 (TKNDTERNKDVDK) are compositionally biased toward basic and acidic residues. T113 is subject to Phosphothreonine; by ATR and ATM. 2 disordered regions span residues 215–236 (IKTQ…KGEK) and 277–303 (EKSS…PPEL). The span at 222–236 (NSDKPPRARNNKGEK) shows a compositional bias: basic and acidic residues. Residues 277–298 (EKSSNSLDNQESSQQRLWTASQ) show a composition bias toward polar residues. Phosphoserine; by ATR and ATM is present on S289. At T319 the chain carries Phosphothreonine; by ATR and ATM. Residues S329 and S355 each carry the phosphoserine; by ATR and ATM modification. Polar residues predominate over residues 591–602 (ISTKDSTQNPTT). The interval 591–610 (ISTKDSTQNPTTSNDIIDTS) is disordered.

This sequence belongs to the SLX4 family. Forms a heterodimer with SLX1. Interacts with RAD1; catalytic subunit of the RAD1-RAD10 endonuclease. Interacts with RTT107. Phosphorylated by ATR (MEC1) and ATM (TEL1) upon DNA damage. This appears to be required for the function with the RAD1-RAD10 endonuclease.

The protein resides in the nucleus. The protein localises to the cytoplasm. Regulatory subunit that interacts with and increases the activity of different structure-specific endonucleases. Has several distinct roles in protecting genome stability by resolving diverse forms of deleterious DNA structures. Component of the SLX1-SLX4 structure-specific endonuclease that resolves DNA secondary structures generated during DNA repair and recombination. Has endonuclease activity towards branched DNA substrates, introducing single-strand cuts in duplex DNA close to junctions with ss-DNA. Has a preference for simple Y, 5'-flap and replication fork-like structures. It cleaves the strand bearing the 5'-non-homologous arm at the branch site junction and generates ligatable, nicked products from the 5'-flap or replication fork substrates. Plays a critical role in maintaining the integrity of the ribosomal DNA (rDNA) loci, where it has a role in re-starting stalled replication forks. Has Holliday junction resolvase activity in vitro. Interacts with the structure-specific RAD1-RAD10 endonuclease and promotes RAD1-RAD10-dependent 3'-non-homologous tail removal (NHTR) during repair of double-strand breaks by single-strand annealing. SLX4 also promotes recovery from DNA-alkylation-induced replisome stalling during DNA replication by facilitating the error-free mode of lesion bypass. This does not require SLX1 or RAD1-RAD10, but probably RTT107. This is Structure-specific endonuclease subunit SLX4 from Saccharomyces cerevisiae (strain RM11-1a) (Baker's yeast).